A 369-amino-acid polypeptide reads, in one-letter code: Glutamate 5-kinase (369 aa).

Residue lysine 8 participates in ATP binding. Substrate-binding residues include serine 49, aspartate 136, and asparagine 148. ATP-binding positions include 168-169 (TD) and 212-218 (TGGMMTK). Positions 277–355 (TGKLYLDSGA…KEISTILGYV (79 aa)) constitute a PUA domain.

Belongs to the glutamate 5-kinase family.

Its subcellular location is the cytoplasm. It carries out the reaction L-glutamate + ATP = L-glutamyl 5-phosphate + ADP. It participates in amino-acid biosynthesis; L-proline biosynthesis; L-glutamate 5-semialdehyde from L-glutamate: step 1/2. In terms of biological role, catalyzes the transfer of a phosphate group to glutamate to form L-glutamate 5-phosphate. The chain is Glutamate 5-kinase from Trichormus variabilis (strain ATCC 29413 / PCC 7937) (Anabaena variabilis).